The primary structure comprises 165 residues: Putative 4-hydroxy-4-methyl-2-oxoglutarate aldolase (165 aa).

Substrate is bound by residues 80 to 83 (GGNL) and R102. An a divalent metal cation-binding site is contributed by D103.

Belongs to the class II aldolase/RraA-like family. Homotrimer. Requires a divalent metal cation as cofactor.

It catalyses the reaction 4-hydroxy-4-methyl-2-oxoglutarate = 2 pyruvate. It carries out the reaction oxaloacetate + H(+) = pyruvate + CO2. Its function is as follows. Catalyzes the aldol cleavage of 4-hydroxy-4-methyl-2-oxoglutarate (HMG) into 2 molecules of pyruvate. Also contains a secondary oxaloacetate (OAA) decarboxylase activity due to the common pyruvate enolate transition state formed following C-C bond cleavage in the retro-aldol and decarboxylation reactions. The sequence is that of Putative 4-hydroxy-4-methyl-2-oxoglutarate aldolase from Cupriavidus necator (strain ATCC 17699 / DSM 428 / KCTC 22496 / NCIMB 10442 / H16 / Stanier 337) (Ralstonia eutropha).